The sequence spans 105 residues: uncharacterized protein (105 aa).

The helical transmembrane segment at 4 to 26 threads the bilayer; that stretch reads TQILLILFVGILVTTPHDIFIII.

It is found in the membrane. This is an uncharacterized protein from Rickettsia conorii (strain ATCC VR-613 / Malish 7).